Consider the following 336-residue polypeptide: tRNA N6-adenosine threonylcarbamoyltransferase (336 aa).

Residues His114 and His118 each contribute to the Fe cation site. Substrate contacts are provided by residues 136-140 (LVSGG), Asp169, Gly182, Asp186, and Asn275. Residue Asp301 coordinates Fe cation.

Belongs to the KAE1 / TsaD family. Fe(2+) is required as a cofactor.

It is found in the cytoplasm. It catalyses the reaction L-threonylcarbamoyladenylate + adenosine(37) in tRNA = N(6)-L-threonylcarbamoyladenosine(37) in tRNA + AMP + H(+). In terms of biological role, required for the formation of a threonylcarbamoyl group on adenosine at position 37 (t(6)A37) in tRNAs that read codons beginning with adenine. Is involved in the transfer of the threonylcarbamoyl moiety of threonylcarbamoyl-AMP (TC-AMP) to the N6 group of A37, together with TsaE and TsaB. TsaD likely plays a direct catalytic role in this reaction. The protein is tRNA N6-adenosine threonylcarbamoyltransferase of Streptococcus gordonii (strain Challis / ATCC 35105 / BCRC 15272 / CH1 / DL1 / V288).